A 341-amino-acid polypeptide reads, in one-letter code: N-acetyl-gamma-glutamyl-phosphate reductase (341 aa).

Residue C147 is part of the active site.

This sequence belongs to the NAGSA dehydrogenase family. Type 1 subfamily.

It localises to the cytoplasm. It carries out the reaction N-acetyl-L-glutamate 5-semialdehyde + phosphate + NADP(+) = N-acetyl-L-glutamyl 5-phosphate + NADPH + H(+). It functions in the pathway amino-acid biosynthesis; L-arginine biosynthesis; N(2)-acetyl-L-ornithine from L-glutamate: step 3/4. Functionally, catalyzes the NADPH-dependent reduction of N-acetyl-5-glutamyl phosphate to yield N-acetyl-L-glutamate 5-semialdehyde. This chain is N-acetyl-gamma-glutamyl-phosphate reductase, found in Dehalococcoides mccartyi (strain CBDB1).